Consider the following 145-residue polypeptide: Large ribosomal subunit protein uL13 (145 aa).

This sequence belongs to the universal ribosomal protein uL13 family. Part of the 50S ribosomal subunit.

This protein is one of the early assembly proteins of the 50S ribosomal subunit, although it is not seen to bind rRNA by itself. It is important during the early stages of 50S assembly. The sequence is that of Large ribosomal subunit protein uL13 from Bacillus cereus (strain ZK / E33L).